The sequence spans 215 residues: Adenylate kinase (215 aa).

10 to 15 (GAGKGT) lines the ATP pocket. The NMP stretch occupies residues 30–59 (STGDMFRLAIKEGTELGKKAKEFMDQGDLV). AMP contacts are provided by residues T31, R36, 57–59 (DLV), 85–88 (GFPR), and Q92. The segment at 126 to 163 (GRRICPTCGTAYHVVYNPPKEEGICDKDGSQLIQRDDD) is LID. ATP is bound at residue R127. Zn(2+) contacts are provided by C130, C133, C150, and D153. AMP is bound by residues R160 and R171. Residue R199 participates in ATP binding.

The protein belongs to the adenylate kinase family. Monomer.

It localises to the cytoplasm. It carries out the reaction AMP + ATP = 2 ADP. It participates in purine metabolism; AMP biosynthesis via salvage pathway; AMP from ADP: step 1/1. Functionally, catalyzes the reversible transfer of the terminal phosphate group between ATP and AMP. Plays an important role in cellular energy homeostasis and in adenine nucleotide metabolism. The polypeptide is Adenylate kinase (Oceanobacillus iheyensis (strain DSM 14371 / CIP 107618 / JCM 11309 / KCTC 3954 / HTE831)).